A 317-amino-acid polypeptide reads, in one-letter code: Adenosine receptor A3 (317 aa).

The Extracellular segment spans residues 1 to 14 (MPVNSTAVSLASVT). N-linked (GlcNAc...) asparagine glycosylation occurs at Asn4. The helical transmembrane segment at 15-37 (YISVEILIGLCAIVGNVLVIWVV) threads the bilayer. At 38–48 (KLNPSLQTTTF) the chain is on the cytoplasmic side. Residues 49 to 72 (YFIVSLALADIAVGVLVMPLAIVI) form a helical membrane-spanning segment. Residues 73 to 84 (SLGVTIHFYSCL) lie on the Extracellular side of the membrane. Cys83 and Cys165 are oxidised to a cystine. A helical membrane pass occupies residues 85-106 (LMTCLLMIFTHASIMSLLAIAV). Topologically, residues 107-126 (DRYLRVKLTVRYRRVTTQRR) are cytoplasmic. The chain crosses the membrane as a helical span at residues 127–148 (IWLALGLCWLVSFLVGLTPMFG). Residues 149-176 (WNMKLSSADKNLTFLPCQFRSVMRMDYM) are Extracellular-facing. A helical transmembrane segment spans residues 177 to 197 (VYFSFFTWILIPLVVMCAIYF). Over 198-230 (DIFYVIRNRLSQNFSGSKETGAFYGREFKTAKS) the chain is Cytoplasmic. Residues 231–254 (LSLVLFLFALSWLPLSIINCIIYF) traverse the membrane as a helical segment. Residues 255–260 (NGEVPQ) lie on the Extracellular side of the membrane. A helical transmembrane segment spans residues 261 to 283 (IVLYLGILLSHANSMMNPIVYAY). At 284–317 (KIKKFKETYLLILKACVICQPSKSMDPSIEQTSE) the chain is on the cytoplasmic side. Cys302 is lipidated: S-palmitoyl cysteine.

This sequence belongs to the G-protein coupled receptor 1 family. In terms of processing, phosphorylation on Thr-315 and Ser-316 may be crucial for rapid desensitization. Phosphorylation on Thr-315 may be necessary for phosphorylation on Ser-316 to occur.

The protein localises to the cell membrane. In terms of biological role, receptor for adenosine. The activity of this receptor is mediated by G proteins which inhibits adenylyl cyclase. The sequence is that of Adenosine receptor A3 (ADORA3) from Bos taurus (Bovine).